The following is a 578-amino-acid chain: Adhesion G protein-coupled receptor A1 (578 aa).

At Met1–Pro22 the chain is on the extracellular side. The helical transmembrane segment at Val23 to Ile43 threads the bilayer. At Leu44–Arg56 the chain is on the cytoplasmic side. A helical membrane pass occupies residues His57 to Ile77. The Extracellular portion of the chain corresponds to Asn78 to Gln87. The helical transmembrane segment at Ala88–Ala108 threads the bilayer. Residues Arg109–Arg137 are Cytoplasmic-facing. A helical membrane pass occupies residues Phe138–Ile158. The Extracellular portion of the chain corresponds to Arg159–Ser178. The chain crosses the membrane as a helical span at residues Leu179–Cys199. At Thr200 to Arg262 the chain is on the cytoplasmic side. Positions Glu216 to Arg236 are disordered. A helical transmembrane segment spans residues Ala263–Ser283. Over Gln284–Asp289 the chain is Extracellular. Residues Met290–His310 traverse the membrane as a helical segment. Disordered stretches follow at residues Pro463–Met486 and Ser537–Val578. Positions Ser469–Ser481 are enriched in low complexity. Positions Ser537–Leu548 are enriched in polar residues.

This sequence belongs to the G-protein coupled receptor 2 family. Adhesion G-protein coupled receptor (ADGR) subfamily. Predominantly expressed in CNS.

The protein resides in the membrane. This is Adhesion G protein-coupled receptor A1 from Mus musculus (Mouse).